Reading from the N-terminus, the 113-residue chain is Hydrogenase maturation factor HybF (113 aa).

Ni(2+)-binding residues include histidine 2 and glutamate 3. Zn(2+) contacts are provided by cysteine 73, cysteine 76, cysteine 89, and cysteine 92.

This sequence belongs to the HypA/HybF family. HybF subfamily.

Involved in the maturation of [NiFe] hydrogenases. Required for nickel insertion into the metal center of the hydrogenase. This chain is Hydrogenase maturation factor HybF, found in Escherichia coli O157:H7.